Here is a 204-residue protein sequence, read N- to C-terminus: RNA-free ribonuclease P (204 aa).

Belongs to the HARP family.

The catalysed reaction is Endonucleolytic cleavage of RNA, removing 5'-extranucleotides from tRNA precursor.. Functionally, RNA-free RNase P that catalyzes the removal of the 5'-leader sequence from pre-tRNA to produce the mature 5'-terminus. This Pyrococcus horikoshii (strain ATCC 700860 / DSM 12428 / JCM 9974 / NBRC 100139 / OT-3) protein is RNA-free ribonuclease P.